A 550-amino-acid chain; its full sequence is uncharacterized protein (550 aa).

Residues 1 to 53 (MVVIANKGALWAYYCKRLLNSVTYMMYPLIRKRTMKKLLLIVGLLLACSTVMR) form the signal peptide. N-linked (GlcNAc...) asparagine glycans are attached at residues N296 and N518.

The protein localises to the endoplasmic reticulum. This is an uncharacterized protein from Schizosaccharomyces pombe (strain 972 / ATCC 24843) (Fission yeast).